Consider the following 353-residue polypeptide: D-alanine--D-alanine ligase (353 aa).

The ATP-grasp domain occupies 141–349 (KAALAGAGLA…LEQLVHELLE (209 aa)). 176–231 (ESGLCYPCFIKPANLGSSVGISKARNREELIHGLRLAATLDPRLVVEQGVQARELE) lines the ATP pocket. Mg(2+)-binding residues include Asp302, Glu316, and Asn318.

This sequence belongs to the D-alanine--D-alanine ligase family. Requires Mg(2+) as cofactor. Mn(2+) is required as a cofactor.

It localises to the cytoplasm. It catalyses the reaction 2 D-alanine + ATP = D-alanyl-D-alanine + ADP + phosphate + H(+). The protein operates within cell wall biogenesis; peptidoglycan biosynthesis. Its function is as follows. Cell wall formation. This Parasynechococcus marenigrum (strain WH8102) protein is D-alanine--D-alanine ligase.